The primary structure comprises 471 residues: Secretogranin-3 (471 aa).

The signal sequence occupies residues M1–A22. 2 disordered regions span residues F23–Y72 and E86–K105. The segment covering K32–L45 has biased composition (basic and acidic residues). The residue at position 40 (S40) is a Phosphoserine. A glycan (O-linked (Xyl...) (chondroitin sulfate) serine) is linked at S40. N71 carries an N-linked (GlcNAc...) asparagine glycan. Residues E86–S96 show a composition bias toward basic and acidic residues. N353 is a glycosylation site (N-linked (GlcNAc...) asparagine). Residues L357–E409 are disordered. Residues E363 to E409 are compositionally biased toward basic and acidic residues. At S365 the chain carries Phosphoserine.

In terms of assembly, interacts with CHGA. Interacts with secretogranin II/SCG2. Interacts (via C-terminus) with CPE.

It is found in the cytoplasmic vesicle. The protein resides in the secretory vesicle. It localises to the secretory vesicle membrane. The protein localises to the secreted. Its function is as follows. Member of the granin protein family that regulates the biogenesis of secretory granules. Acts as a sorting receptor for intragranular proteins including chromogranin A/CHGA. May also play a role in angiogenesis. Promotes endothelial proliferation, migration and tube formation through MEK/ERK signaling pathway. The sequence is that of Secretogranin-3 (SCG3) from Bos taurus (Bovine).